Reading from the N-terminus, the 134-residue chain is Holo-[acyl-carrier-protein] synthase (134 aa).

Mg(2+)-binding residues include aspartate 8 and glutamate 57.

The protein belongs to the P-Pant transferase superfamily. AcpS family. Mg(2+) is required as a cofactor.

The protein localises to the cytoplasm. It carries out the reaction apo-[ACP] + CoA = holo-[ACP] + adenosine 3',5'-bisphosphate + H(+). Functionally, transfers the 4'-phosphopantetheine moiety from coenzyme A to a Ser of acyl-carrier-protein. In Rhizobium johnstonii (strain DSM 114642 / LMG 32736 / 3841) (Rhizobium leguminosarum bv. viciae), this protein is Holo-[acyl-carrier-protein] synthase.